Reading from the N-terminus, the 1776-residue chain is 6-methylsalicylic acid synthase (1776 aa).

Residues 1–18 are compositionally biased toward low complexity; it reads MHSVSPSTYPSGGTSPAP. The segment at 1-26 is disordered; that stretch reads MHSVSPSTYPSGGTSPAPADTPGTEY. Residues 32-457 form the Ketosynthase family 3 (KS3) domain; sequence SNDVAVVGMA…GTVSHAVIEE (426 aa). Active-site for beta-ketoacyl synthase activity residues include Cys-204, His-339, and His-379. Residues 567–880 are malonyl-CoA:ACP transacylase (MAT) domain; it reads VWVFSGHGAQ…IAQLHCRGAE (314 aa). The interval 925-1044 is N-terminal hotdog fold; the sequence is HTLLGQRIPV…AYWDRKVLGS (120 aa). The dehydratase (DH) domain stretch occupies residues 925-1196; it reads HTLLGQRIPV…FTAMRFSEIE (272 aa). Positions 925–1201 constitute a PKS/mFAS DH domain; the sequence is HTLLGQRIPV…FSEIEGTPGV (277 aa). His-957 (proton acceptor; for dehydratase activity) is an active-site residue. The segment at 1058 to 1201 is C-terminal hotdog fold; it reads TTKLADNFSI…FSEIEGTPGV (144 aa). Asp-1113 (proton donor; for dehydratase activity) is an active-site residue. A product template (PT) domain region spans residues 1205–1657; that stretch reads MESLVHQIAW…LRSLAIDDGE (453 aa). The Carrier domain maps to 1700–1774; it reads AYLDEKIRGC…HLVVWFAEKI (75 aa). Ser-1734 is subject to O-(pantetheine 4'-phosphoryl)serine.

The protein resides in the cytoplasm. The protein localises to the cytosol. It carries out the reaction 3 malonyl-CoA + acetyl-CoA + NADPH + 3 H(+) = 6-methylsalicylate + 3 CO2 + NADP(+) + 4 CoA + H2O. Its pathway is mycotoxin biosynthesis; patulin biosynthesis. 6-methylsalicylic acid synthase; part of the gene cluster that mediates the biosynthesis of patulin, an acetate-derived tetraketide mycotoxin produced by several fungal species that shows antimicrobial properties against several bacteria. PatK catalyzes the first step of the pathway which is the synthesis of 6-methylsalicylic acid via condensation of 1 acetate and 3 malonate units. The pathway begins with the synthesis of 6-methylsalicylic acid by the polyketide synthase (PKS) patK via condensation of acetate and malonate units. The 6-methylsalicylic acid decarboxylase patG then catalyzes the decarboxylation of 6-methylsalicylic acid to yield m-cresol (also known as 3-methylphenol). These first reactions occur in the cytosol. The intermediate m-cresol is then transported into the endoplasmic reticulum where the cytochrome P450 monooxygenase patH converts it to m-hydroxybenzyl alcohol, which is further converted to gentisyl alcohol by the cytochrome P450 monooxygenase patI. The oxidoreductases patJ and patO further convert gentisyl alcohol to isoepoxydon in the vacuole. PatN catalyzes then the transformation of isoepoxydon into phyllostine. The cluster protein patF is responsible for the conversion from phyllostine to neopatulin whereas the alcohol dehydrogenase patD converts neopatulin to E-ascladiol. The steps between isoepoxydon and E-ascladiol occur in the cytosol, and E-ascladiol is probably secreted to the extracellular space by one of the cluster-specific transporters patC or patM. Finally, the secreted patulin synthase patE catalyzes the conversion of E-ascladiol to patulin. This is 6-methylsalicylic acid synthase from Penicillium expansum (Blue mold rot fungus).